The chain runs to 1953 residues: MNPMQKKKLISIAIALTLQSYYIPAIAAENNDDEKECPSNISSLPKEKRAKLSPTCLATPENDNHWGWVAGGVAALVAGVAIGVENNGGGDSNHSYTPPKPDNGGDVTPPDDGGNVTPPDDGGNVTPPDDGGDDNVTPPDDSGDDDVAPPDDSGDDDVTPPDDSGDDDVTPPDDSGDGDVTPPDDSGDDDVTPPDDSGDDDVTPPDDSGDDDVTPPDDSGDDDVTPPDDSGDDDVTPPDDSGDDDDTPPDDSVITFSNGVTIDKGKDTLTFDSFKLDNGSVLEGAVWNYSEQDNQWQLTTADGKTLNVTGWDVTDANAAVIEGTQENGLYWKYDSRGYLIIADDNTTVISGDDQAHNSDRGMDISGQDRTGVIISGDRTVNTLTGDSSVTDGATGMVISGDGTTNTISGHSTVDNATGALISGNGTTTNFAGDIAVSGGGTAIIIDGDNATIKNTGTSDISGAGSTGTVIDGNNARVNNDGDMTITDGGTGGHITGDNVVIDNAGSTTVSGADATALYIEGDNALVINEGNQTISGGAVGTRIDGDDAHTTNTGDIAVDGAGSAAVIINGDNGSLTQAGDLLVTDGAMGIITYGTGNEAKNTGNATVRDADSVGFVVAGEKNTFKNKGDIDVSLNGTGALVSGDMSQVTLDGDINVVSVQDSEGVFSSATGVSVSGDSNAVDITGNVNISADYGQDDLAAGAPPLTGVVVGGNGNTVTLNGALNIDDNDLSATGGQYLDVVGLSVTGDDNDVEIDGGINITHSEDPLDGTSADITGISVSGNSTVTLNGHSTIDTNTVVGGHVVLARVNNGGSLILGDDSVVDVNVSYIPTGYYTYNALLMADGEGTSIENKGDITSHGVYSVIRADNGSEVSNSGDILVYATSSNSSEDRAAITRASGEGSAVHNKAGGDITLISDQTPQGSGGIEVYPLKWYTHTFYAMMASDYGDVVNDEGATIHLQGAGVYGVTASRGKALNEGNIYLDGLVPTLDDENNITSTSYWQPSSLYLTSSGMVAGSTDADGDATAINTGNITVNNAGFGMMALNGGTAINQGVITLTADDGVTGQADELVGMAALNGGVVINDTSGVINIDADYGQAFLSDSSSYIINNGSINLNGSPMDDTDSHMGGTPTDKIWIQSLPGSGDSDTRTSDTGFFTAGTLANYGTETLNGDVDVNGGWLYNEAGASLTVNGTVTINGGANALANYGTLDADAISTWHSLFNEADGSITTDLLTLNGDVTFYNNGDFTGSIAGTSYQQEIVNTGDMTVAEDGKSLVSGSFYFYNEEDATLTNSGSAVEGGENTIINLTRANDSLTQVNSGTITATNGYSAITTVNGSNDPKWIWNTATGVINGINPDAPLINLGRGYNFGNQGTINVQGDNAVAISGGTSSYVINLVNSGTINVGTEQGKEDGTNGTGLIGIKGNGNATTINNTADGVINVYADDSYAFGGKTKAIINNGEINLLCDSGCDIYAPGTTGTQNDHNGTADIVIPDATTAPTEGSIPTPPADPNAPQQLSNYIVGTNADGSSGTLKANNLVIGDNVKVDTGFTSGTADTTVVVDNAFTGSNIQGADNITSTSVVWNAQGSQDADGNVDVTMTKNAYADVATDSSVSDVAQALDAGYTNNELYTSLNVGTTAELNSALKQVSGAQATTVFREARVLSNRFTMLADAAPQIKDGLAFNVVAKGDPRAELGNDTQYDMLALRQTLDLTASQNLTLEYGIARLDGDGSKTAGDNGLTGGYSQFFGLKHSMAFDEGLAWNNSLRYDVHNLDSSRSVAYGDVNKIADSDMRQQYLEFRSEGAKTFTMMGDALKVTPYAGVKFRHTMEDGYKERSAGDFNLSMNSGNETAVDSIVGLKLDYAGKDGWSATATLEGGPNLSYSKSQRTASLQGAAGQSFGVDDGQKGGGVNGLATIGVKYSSNDTALHLDAYQWKEDGISDKGFMLNVKKTFR.

A signal peptide spans 1 to 27 (MNPMQKKKLISIAIALTLQSYYIPAIA). 3 disordered regions span residues 31–50 (NDDE…EKRA), 88–258 (GGGD…TFSN), and 1496–1517 (TTAP…PQQL). Residues 101–103 (PDN) form a 1; truncated repeat. The segment at 101 to 252 (PDNGGDVTPP…DDDDTPPDDS (152 aa)) is 15 X 11 AA tandem repeats. Residues 104–113 (GGDVTPPDDG) form a 2; truncated repeat. A 3; truncated repeat occupies 114-122 (GNVTPPDDG). 11 repeat units span residues 123–133 (GNVTPPDDGGD), 134–144 (DNVTPPDDSGD), 145–155 (DDVAPPDDSGD), 156–166 (DDVTPPDDSGD), 167–177 (DDVTPPDDSGD), 178–188 (GDVTPPDDSGD), 189–199 (DDVTPPDDSGD), 200–210 (DDVTPPDDSGD), 211–221 (DDVTPPDDSGD), 222–232 (DDVTPPDDSGD), and 233–243 (DDVTPPDDSGD). Composition is skewed to acidic residues over residues 141-177 (DSGD…DSGD) and 185-249 (DSGD…DTPP). Residues 244–252 (DDDTPPDDS) form a 15; truncated repeat. An Autotransporter domain is found at 1649-1952 (SGAQATTVFR…GFMLNVKKTF (304 aa)).

This chain is Putative surface-exposed virulence protein BigA (bigA), found in Salmonella typhimurium (strain LT2 / SGSC1412 / ATCC 700720).